Reading from the N-terminus, the 225-residue chain is Phosphoenolpyruvate guanylyltransferase (225 aa).

3 residues coordinate phosphoenolpyruvate: threonine 150, glycine 166, and serine 169. The disordered stretch occupies residues 167 to 186 (PESARGHANSGARPLNGQWP).

Belongs to the CofC family.

It catalyses the reaction phosphoenolpyruvate + GTP + H(+) = enolpyruvoyl-2-diphospho-5'-guanosine + diphosphate. Its pathway is cofactor biosynthesis; coenzyme F420 biosynthesis. Guanylyltransferase that catalyzes the activation of phosphoenolpyruvate (PEP) as enolpyruvoyl-2-diphospho-5'-guanosine, via the condensation of PEP with GTP. It is involved in the biosynthesis of coenzyme F420, a hydride carrier cofactor. The chain is Phosphoenolpyruvate guanylyltransferase from Rhodococcus erythropolis (strain PR4 / NBRC 100887).